Consider the following 83-residue polypeptide: uncharacterized protein (83 aa).

A run of 2 helical transmembrane segments spans residues Gly-23 to Ala-43 and Ser-49 to Gly-69.

The protein localises to the cell membrane. This is an uncharacterized protein from Mycobacterium tuberculosis (strain CDC 1551 / Oshkosh).